A 103-amino-acid chain; its full sequence is Small ribosomal subunit protein uS10 (103 aa).

Belongs to the universal ribosomal protein uS10 family. Part of the 30S ribosomal subunit.

In terms of biological role, involved in the binding of tRNA to the ribosomes. This chain is Small ribosomal subunit protein uS10, found in Chlorobium phaeobacteroides (strain DSM 266 / SMG 266 / 2430).